We begin with the raw amino-acid sequence, 757 residues long: Subtilisin-like protease SBT1.7 (757 aa).

Residues 1–24 (MSSSFLSSTAFFLLLCLGFCHVSS) form the signal peptide. Residues 25–106 (SSSDQGTYIV…VLPEHRYELH (82 aa)) constitute a propeptide that is removed on maturation. The region spanning 31 to 106 (TYIVHMAKSQ…VLPEHRYELH (76 aa)) is the Inhibitor I9 domain. Residues 102-610 (RYELHTTRTP…AGHVSPTTAT (509 aa)) enclose the Peptidase S8 domain. The active-site Charge relay system is aspartate 139. An N-linked (GlcNAc...) asparagine glycan is attached at asparagine 170. The tract at residues 196–219 (PIDESKESRSPRDDDGHGTHTSST) is disordered. Positions 198–213 (DESKESRSPRDDDGHG) are enriched in basic and acidic residues. Histidine 212 (charge relay system) is an active-site residue. Residues asparagine 352, asparagine 376, and asparagine 379 are each glycosylated (N-linked (GlcNAc...) asparagine). Catalysis depends on serine 542, which acts as the Charge relay system. N-linked (GlcNAc...) asparagine glycosylation is found at asparagine 631 and asparagine 644.

The protein belongs to the peptidase S8 family. Expressed in immature siliques and at lower levels in stems and flowers. Widely expressed at low levels.

The protein localises to the secreted. Its subcellular location is the cell wall. Its activity is regulated as follows. Activated by calcium. Inhibited by the serine protease inhibitors 4-(2-aminoethyl)benzenesulphonyl fluoride (AEBSF), PMSF, di-isopropyl phosphofluoridate (DFP) and soybean trypsin inhibitor (SBTI). Not inhibited by benzamidine or iodoacetamide. Leupeptin and pepstatin A have a minor inhibitory action. Its function is as follows. Serine protease. Has a substrate preference for the hydrophobic residues Phe and Ala and the basic residue Asp in the P1 position, and for Asp, Leu or Ala in the P1' position. Essential for mucilage release from seed coats. Triggers the accumulation and/or activation of cell wall modifying enzymes necessary either for the loosening of the outer primary cell wall, or to facilitate swelling of the mucilage. In Arabidopsis thaliana (Mouse-ear cress), this protein is Subtilisin-like protease SBT1.7.